The primary structure comprises 357 residues: 3-dehydroquinate synthase (357 aa).

Residues 104-108 (GVVGD), 128-129 (TT), K141, and 168-171 (FLET) each bind NAD(+). Residues E183, H243, and H260 each coordinate Zn(2+).

This sequence belongs to the sugar phosphate cyclases superfamily. Dehydroquinate synthase family. Co(2+) is required as a cofactor. Requires Zn(2+) as cofactor. It depends on NAD(+) as a cofactor.

It localises to the cytoplasm. It carries out the reaction 7-phospho-2-dehydro-3-deoxy-D-arabino-heptonate = 3-dehydroquinate + phosphate. It functions in the pathway metabolic intermediate biosynthesis; chorismate biosynthesis; chorismate from D-erythrose 4-phosphate and phosphoenolpyruvate: step 2/7. In terms of biological role, catalyzes the conversion of 3-deoxy-D-arabino-heptulosonate 7-phosphate (DAHP) to dehydroquinate (DHQ). This chain is 3-dehydroquinate synthase, found in Streptococcus pyogenes serotype M49 (strain NZ131).